We begin with the raw amino-acid sequence, 639 residues long: Kininogen-1 (639 aa).

The N-terminal stretch at 1–18 (MKLITILLLCSRLLPSLA) is a signal peptide. Residues 28–132 (CNDESLFQAV…TQICNITPGK (105 aa)) form the Cystatin kininogen-type 1 domain. 9 disulfides stabilise this stretch: Cys28-Cys609, Cys83-Cys94, Cys107-Cys126, Cys142-Cys145, Cys206-Cys218, Cys229-Cys248, Cys264-Cys267, Cys328-Cys340, and Cys351-Cys370. A glycan (N-linked (GlcNAc...) asparagine) is linked at Asn82. One can recognise a Cystatin kininogen-type 2 domain in the interval 151 to 254 (VDSPELGPVL…SDSCEFYPGD (104 aa)). Asn169 and Asn205 each carry an N-linked (GlcNAc...) asparagine glycan. One can recognise a Cystatin kininogen-type 3 domain in the interval 273-376 (VDSPELKEAL…TVKCKVLDMT (104 aa)). Asn294 carries an N-linked (GlcNAc...) asparagine glycan. Residue Ser332 is modified to Phosphoserine. 2 disordered regions span residues 438-462 (NHQGHKHGHGIGHGHQKPHGLGHGH) and 476-547 (GYDH…LNPP). A compositionally biased stretch (basic residues) spans 482 to 502 (PVGHGHGQRHGHGHGHGHGRD). Residues 503–519 (KHTNKDKNNVKHTDQRR) show a composition bias toward basic and acidic residues. A compositionally biased stretch (polar residues) spans 522-537 (LTSSSEDNTTSTQIQG). N-linked (GlcNAc...) asparagine glycosylation occurs at Asn529.

Post-translationally, bradykinin is released from kininogen by plasma kallikrein. Phosphorylated by FAM20C in the extracellular medium. In terms of processing, bradykinin is inactivated by ACE, which removes the dipeptide Arg-Phe from its C-terminus. As to expression, plasma.

The protein resides in the secreted. The protein localises to the extracellular space. In terms of biological role, kininogens are inhibitors of thiol proteases. HMW-kininogen plays an important role in blood coagulation by helping to position optimally prekallikrein and factor XI next to factor XII; HMW-kininogen inhibits the thrombin- and plasmin-induced aggregation of thrombocytes. LMW-kininogen inhibits the aggregation of thrombocytes. LMW-kininogen is in contrast to HMW-kininogen not involved in blood clotting. Its function is as follows. The active peptide bradykinin is a potent vasodilatator that is released from HMW-kininogen shows a variety of physiological effects: (A) influence in smooth muscle contraction, (B) induction of hypotension, (C) natriuresis and diuresis, (D) decrease in blood glucose level, (E) it is a mediator of inflammation and causes (E1) increase in vascular permeability, (E2) stimulation of nociceptors (4E3) release of other mediators of inflammation (e.g. prostaglandins), (F) it has a cardioprotective effect (directly via bradykinin action, indirectly via endothelium-derived relaxing factor action). The chain is Kininogen-1 (Kng1) from Rattus norvegicus (Rat).